Consider the following 154-residue polypeptide: Transcriptional repressor NrdR (154 aa).

A zinc finger lies at 3 to 34 (CPYCRHPDSRVVDSREADDGQLIRRRRSCPEC). In terms of domain architecture, ATP-cone spans 46 to 136 (LAVVKRSGVT…VYRSFESLAD (91 aa)).

The protein belongs to the NrdR family. It depends on Zn(2+) as a cofactor.

Its function is as follows. Negatively regulates transcription of bacterial ribonucleotide reductase nrd genes and operons by binding to NrdR-boxes. This Salinispora arenicola (strain CNS-205) protein is Transcriptional repressor NrdR.